Reading from the N-terminus, the 337-residue chain is Ornithine carbamoyltransferase, catabolic (337 aa).

Residues 57–60 (STRT), Gln84, Arg108, and 135–138 (HPTQ) contribute to the carbamoyl phosphate site. L-ornithine is bound by residues Asn167, Asp231, and 235–236 (SM). Residues 272–273 (CL) and Arg317 each bind carbamoyl phosphate.

This sequence belongs to the aspartate/ornithine carbamoyltransferase superfamily. OTCase family.

It is found in the cytoplasm. The catalysed reaction is carbamoyl phosphate + L-ornithine = L-citrulline + phosphate + H(+). The protein operates within amino-acid degradation; L-arginine degradation via ADI pathway; carbamoyl phosphate from L-arginine: step 2/2. Reversibly catalyzes the transfer of the carbamoyl group from carbamoyl phosphate (CP) to the N(epsilon) atom of ornithine (ORN) to produce L-citrulline. This chain is Ornithine carbamoyltransferase, catabolic, found in Streptococcus ratti.